Here is a 344-residue protein sequence, read N- to C-terminus: Heat-inducible transcription repressor HrcA (344 aa).

This sequence belongs to the HrcA family.

Negative regulator of class I heat shock genes (grpE-dnaK-dnaJ and groELS operons). Prevents heat-shock induction of these operons. This chain is Heat-inducible transcription repressor HrcA, found in Anoxybacillus flavithermus (strain DSM 21510 / WK1).